Reading from the N-terminus, the 102-residue chain is MKVTDVRLRKIQTDGRMKALVSITLDEAFVIHDLRVIEGNSGLFVAMPSKRTPDGEFRDIAHPINSDMRQEIQDAVMKVYDETDEVIPDKNATSDNEESDEA.

The interval 83–102 (TDEVIPDKNATSDNEESDEA) is disordered.

The protein belongs to the SpoVG family.

Could be involved in septation. This is Putative septation protein SpoVG from Staphylococcus epidermidis (strain ATCC 35984 / DSM 28319 / BCRC 17069 / CCUG 31568 / BM 3577 / RP62A).